The chain runs to 241 residues: Phosphoribosylaminoimidazole-succinocarboxamide synthase (241 aa).

This sequence belongs to the SAICAR synthetase family.

It carries out the reaction 5-amino-1-(5-phospho-D-ribosyl)imidazole-4-carboxylate + L-aspartate + ATP = (2S)-2-[5-amino-1-(5-phospho-beta-D-ribosyl)imidazole-4-carboxamido]succinate + ADP + phosphate + 2 H(+). It participates in purine metabolism; IMP biosynthesis via de novo pathway; 5-amino-1-(5-phospho-D-ribosyl)imidazole-4-carboxamide from 5-amino-1-(5-phospho-D-ribosyl)imidazole-4-carboxylate: step 1/2. The chain is Phosphoribosylaminoimidazole-succinocarboxamide synthase from Lacticaseibacillus casei (strain BL23) (Lactobacillus casei).